A 187-amino-acid polypeptide reads, in one-letter code: ECF RNA polymerase sigma factor SigK (187 aa).

The tract at residues 30-96 is sigma-70 factor domain-2; sequence YDHTKSRVYG…RAVDRVRCEQ (67 aa). Positions 53-56 match the Interaction with polymerase core subunit RpoC motif; sequence ETTQ. Positions 133 to 182 are sigma-70 factor domain-4; sequence CLKALTDTQRQCIELAYYGGLTYVEVSRRLAANLSTIKSRMRDALRSLRN. The H-T-H motif DNA-binding region spans 155 to 174; the sequence is YVEVSRRLAANLSTIKSRMR.

The protein belongs to the sigma-70 factor family. ECF subfamily. As to quaternary structure, interacts transiently with the RNA polymerase catalytic core formed by RpoA, RpoB, RpoC and RpoZ (2 alpha, 1 beta, 1 beta' and 1 omega subunit) to form the RNA polymerase holoenzyme that can initiate transcription. Interacts (via sigma-70 factor domain 4) with anti-sigma-K factor RskA.

In terms of biological role, sigma factors are initiation factors that promote the attachment of RNA polymerase to specific initiation sites and are then released. Extracytoplasmic function (ECF) sigma factors are held in an inactive form by an anti-sigma factor until released by regulated intramembrane proteolysis. In Mycobacterium tuberculosis (strain ATCC 25177 / H37Ra), this protein is ECF RNA polymerase sigma factor SigK (sigK).